We begin with the raw amino-acid sequence, 503 residues long: Cobyric acid synthase (503 aa).

The 190-residue stretch at 255–444 folds into the GATase cobBQ-type domain; sequence DIDIAVIRYP…FHDLFHNDAF (190 aa). Cysteine 337 functions as the Nucleophile in the catalytic mechanism. Residue histidine 436 is part of the active site.

The protein belongs to the CobB/CobQ family. CobQ subfamily.

It functions in the pathway cofactor biosynthesis; adenosylcobalamin biosynthesis. In terms of biological role, catalyzes amidations at positions B, D, E, and G on adenosylcobyrinic A,C-diamide. NH(2) groups are provided by glutamine, and one molecule of ATP is hydrogenolyzed for each amidation. The polypeptide is Cobyric acid synthase (Geobacillus sp. (strain WCH70)).